We begin with the raw amino-acid sequence, 367 residues long: Indole glucosinolate O-methyltransferase 5 (367 aa).

Residues Gly-209, Asp-232, Asp-252, Met-253, and Lys-266 each coordinate S-adenosyl-L-homocysteine. Catalysis depends on His-270, which acts as the Proton acceptor.

It belongs to the class I-like SAM-binding methyltransferase superfamily. Cation-independent O-methyltransferase family.

It functions in the pathway secondary metabolite biosynthesis. Functionally, involved in indole glucosinolate biosynthesis. Catalyzes methoxylation reactions of the glucosinolate indole ring. Converts the hydroxy intermediates 4-hydroxy-indol-3-yl-methylglucosinolate (4OH-I3M) and 1-hydroxy-indol-3-yl-methylglucosinolate (1OH-I3M) to 4-methoxy-indol-3-yl-methylglucosinolate (4MO-I3M) and 1-methoxy-indol-3-yl-methylglucosinolate, respectively. This chain is Indole glucosinolate O-methyltransferase 5, found in Arabidopsis thaliana (Mouse-ear cress).